The following is a 1582-amino-acid chain: SET-binding protein (1582 aa).

Disordered stretches follow at residues 1–76 (MEPR…WVAG), 124–246 (ITIK…KVPA), 278–416 (LLGS…KRQS), and 446–513 (SNSE…KLSE). The span at 18 to 27 (EFLQGSSSRS) shows a compositional bias: polar residues. Positions 57-74 (GSGRDVDCNSNADSEKWV) are enriched in basic and acidic residues. Composition is skewed to polar residues over residues 126–141 (IKQS…GKNS) and 213–229 (MEWS…QNCF). Over residues 278–298 (LLGSVVPSPSSHNSPATPSSS) the composition is skewed to low complexity. The segment covering 356-365 (ETTEGKREAY) has biased composition (basic and acidic residues). Residues 368–388 (DSAQEASPARQSISSVSNPEN) show a composition bias toward polar residues. Over residues 450-465 (GSKKDPRVPKLGKMIE) the composition is skewed to basic and acidic residues. The a.T hook 1 DNA-binding region spans 575-587 (KKKRGRPKKQPLL). Disordered regions lie at residues 595 to 617 (GTST…RKRR) and 709 to 787 (RGTI…ASTE). Polar residues predominate over residues 770–787 (LSTQLGGSNGNLSPASTE). Residue lysine 808 is modified to N6-acetyllysine. Over residues 845–871 (SPVSESHSEETIPSDSGIGTDNNSTSD) the composition is skewed to polar residues. The interval 845–880 (SPVSESHSEETIPSDSGIGTDNNSTSDQAEKSSESR) is disordered. Residues 1007–1019 (KKKRGRPAKTNDT) constitute a DNA-binding region (a.T hook 2). 6 disordered regions span residues 1128–1155 (VGGA…DRIL), 1182–1215 (SGSD…VSKN), 1236–1265 (AKDK…TRSE), 1429–1461 (QRQS…RDQM), 1470–1489 (LPSK…EPAS), and 1507–1582 (EAPP…DVLP). Residues 1137-1150 (RLHKRKHKHKRKHK) show a composition bias toward basic residues. Over residues 1182-1196 (SGSDKELPLVSEKSK) the composition is skewed to basic and acidic residues. The span at 1439–1448 (VKKRRGRPRK) shows a compositional bias: basic residues. A DNA-binding region (a.T hook 3) is located at residues 1440 to 1452 (KKRRGRPRKQPSQ). 2 stretches are compositionally biased toward pro residues: residues 1509–1533 (PPLP…PPLP) and 1546–1559 (QPPA…PQPL).

Interacts with SET.

It localises to the nucleus. The sequence is that of SET-binding protein (Setbp1) from Mus musculus (Mouse).